The chain runs to 211 residues: MKKQFLEKAVFTVAATAATVVLGNKMADADTYTLQEGDSFFSVAQRYHMDAYELASMNGKDITSLILPGQTLTVNGSAAPDNQAAAPTDTTQATTETNDANANTYPVGQCTWGVKAVATWAGDWWGNGGDWASSASAQGYTVGNTPAVGSIMCWTDGGYGHVAYVTAVGEDGKVQVLESNYKDQQWVDNYRGWFDPNNSGTPGSVSYIYPN.

A signal peptide spans M1–A29. The region spanning D30–V74 is the LysM domain. The interval S77 to N101 is disordered. The segment covering A78–N101 has biased composition (low complexity). A Peptidase C51 domain is found at A85–Y209.

This chain is Putative hydrolase SMU_367, found in Streptococcus mutans serotype c (strain ATCC 700610 / UA159).